The following is a 413-amino-acid chain: UPF0754 membrane protein PCC7424_0748 (413 aa).

The next 2 membrane-spanning stretches (helical) occupy residues 3–23 (IALE…GAII) and 391–411 (IVNL…VILL).

Belongs to the UPF0754 family.

Its subcellular location is the cell inner membrane. This chain is UPF0754 membrane protein PCC7424_0748, found in Gloeothece citriformis (strain PCC 7424) (Cyanothece sp. (strain PCC 7424)).